The chain runs to 143 residues: Ribosome maturation factor RimP (143 aa).

The protein belongs to the RimP family.

The protein resides in the cytoplasm. Functionally, required for maturation of 30S ribosomal subunits. This is Ribosome maturation factor RimP from Neisseria gonorrhoeae (strain ATCC 700825 / FA 1090).